A 428-amino-acid chain; its full sequence is Enolase (428 aa).

Gln163 is a (2R)-2-phosphoglycerate binding site. Glu205 serves as the catalytic Proton donor. Positions 242, 285, and 312 each coordinate Mg(2+). Positions 337, 366, 367, and 388 each coordinate (2R)-2-phosphoglycerate. Lys337 serves as the catalytic Proton acceptor.

This sequence belongs to the enolase family. As to quaternary structure, component of the RNA degradosome, a multiprotein complex involved in RNA processing and mRNA degradation. The cofactor is Mg(2+).

The protein localises to the cytoplasm. The protein resides in the secreted. It is found in the cell surface. It carries out the reaction (2R)-2-phosphoglycerate = phosphoenolpyruvate + H2O. The protein operates within carbohydrate degradation; glycolysis; pyruvate from D-glyceraldehyde 3-phosphate: step 4/5. Its function is as follows. Catalyzes the reversible conversion of 2-phosphoglycerate (2-PG) into phosphoenolpyruvate (PEP). It is essential for the degradation of carbohydrates via glycolysis. In Halorhodospira halophila (strain DSM 244 / SL1) (Ectothiorhodospira halophila (strain DSM 244 / SL1)), this protein is Enolase.